The sequence spans 196 residues: Guanylate kinase (196 aa).

The Guanylate kinase-like domain occupies 7-191; sequence RNIVLLVGPS…AAEEIEKIIL (185 aa). 14-21 provides a ligand contact to ATP; the sequence is GPSGVGKG.

It belongs to the guanylate kinase family.

The protein localises to the cytoplasm. The enzyme catalyses GMP + ATP = GDP + ADP. Its function is as follows. Essential for recycling GMP and indirectly, cGMP. The protein is Guanylate kinase of Mycoplasmopsis pulmonis (strain UAB CTIP) (Mycoplasma pulmonis).